Here is a 447-residue protein sequence, read N- to C-terminus: Multidrug efflux pump SdrM (447 aa).

14 helical membrane-spanning segments follow: residues 6 to 26 (IITV…SSII), 42 to 62 (LISL…PIVG), 70 to 90 (IIYV…MCGL), 94 to 114 (FTML…LMSL), 134 to 154 (IVGS…GGIL), 161 to 181 (WLFY…IWTF), 194 to 214 (FDTK…FALL), 217 to 237 (QLLL…MCLF), 260 to 280 (VFIT…YIPV), 286 to 306 (LGLS…AWIT), 323 to 342 (IYLL…SFGI), 346 to 363 (VLIA…GYIY), 392 to 412 (LGAS…SGIF), and 418 to 438 (NVLS…VVFF).

The protein belongs to the major facilitator superfamily.

Its subcellular location is the cell membrane. Functionally, energy-dependent drug efflux pump that increases resistance to antimicrobial agents such as norfloxacin, acriflavine and ethidium bromide. The protein is Multidrug efflux pump SdrM of Staphylococcus aureus (strain N315).